We begin with the raw amino-acid sequence, 554 residues long: Glucose-6-phosphate isomerase (554 aa).

E359 (proton donor) is an active-site residue. Residues H390 and K518 contribute to the active site.

It belongs to the GPI family.

The protein localises to the cytoplasm. It catalyses the reaction alpha-D-glucose 6-phosphate = beta-D-fructose 6-phosphate. The protein operates within carbohydrate biosynthesis; gluconeogenesis. It participates in carbohydrate degradation; glycolysis; D-glyceraldehyde 3-phosphate and glycerone phosphate from D-glucose: step 2/4. In terms of biological role, catalyzes the reversible isomerization of glucose-6-phosphate to fructose-6-phosphate. This is Glucose-6-phosphate isomerase from Pseudomonas savastanoi pv. phaseolicola (strain 1448A / Race 6) (Pseudomonas syringae pv. phaseolicola (strain 1448A / Race 6)).